Consider the following 20-residue polypeptide: Hongotoxin-5 (20 aa).

The protein belongs to the short scorpion toxin superfamily. Potassium channel inhibitor family. Alpha-KTx 02 subfamily. As to expression, expressed by the venom gland.

Its subcellular location is the secreted. Functionally, potent selective inhibitor of Kv1/KCNA voltage-gated potassium channels. In Centruroides limbatus (Bark scorpion), this protein is Hongotoxin-5.